Consider the following 1032-residue polypeptide: Protein phosphatase 1 regulatory subunit 12A (1032 aa).

The KVKF motif signature appears at 35–38 (KVKF). 6 ANK repeats span residues 39 to 68 (DDGA…DINY), 72 to 101 (DGLT…NINQ), 105 to 134 (EGWI…HVGA), 138 to 164 (EGDT…RQGV), 198 to 227 (SGGT…DVNI), and 231 to 260 (DGWT…DMET). (3S)-3-hydroxyasparagine; by HIF1AN occurs at positions 67 and 100. Position 226 is a (3S)-3-hydroxyasparagine; by HIF1AN (asparagine 226). Disordered stretches follow at residues 290–553 (LHSE…HRSC) and 588–928 (SSTS…RLEK). Over residues 291-300 (HSEKRDKKSP) the composition is skewed to basic and acidic residues. Phosphoserine is present on serine 299. Over residues 302 to 316 (IESTANMENNQPQKT) the composition is skewed to polar residues. The segment covering 318-340 (KNKETLIIEPEKNASRIESLEQE) has biased composition (basic and acidic residues). Acidic residues predominate over residues 357–369 (SEEDEEDDSESEA). Residues 383-399 (AHTASTQAAPAAVTTPT) are compositionally biased toward low complexity. The segment covering 400–421 (LSSNQGTPTSPVKKFPTSTTKI) has biased composition (polar residues). Serine 422 and serine 432 each carry phosphoserine. The span at 422–432 (SPKEEERKDES) shows a compositional bias: basic and acidic residues. Threonine 443 is modified (phosphothreonine). Serine 445 is modified (phosphoserine). Tyrosine 446 bears the Phosphotyrosine mark. Over residues 469–480 (RSASSPRLSSSL) the composition is skewed to low complexity. A Phosphoserine; by NUAK1 modification is found at serine 472. Serine 473 is modified (phosphoserine; by CDK1). Serine 477 carries the post-translational modification Phosphoserine. The span at 481-491 (DNKEKEKDNKG) shows a compositional bias: basic and acidic residues. Phosphoserine occurs at positions 507 and 509. Residues 540 to 551 (NSSINEGSTYHR) show a composition bias toward polar residues. Serine 601 bears the Phosphoserine mark. Positions 602–612 (PAGTQSSTSNR) are enriched in polar residues. Residues 614–625 (WAEDSTEKEKDS) show a composition bias toward basic and acidic residues. The residue at position 618 (serine 618) is a Phosphoserine. A compositionally biased stretch (low complexity) spans 633–661 (LVAPTVVSAAASSTTALTTTTAGTLSSTS). Basic and acidic residues predominate over residues 674–683 (VRDEESESQR). The segment at 683–866 (RKARSRQARQ…VSFWTQDSDE (184 aa)) is interaction with ROCK2. Residues 684 to 694 (KARSRQARQSR) are compositionally biased toward basic residues. Phosphoserine; by PKA and PKG; in vitro occurs at positions 693 and 696. Phosphothreonine; by ROCK1, ROCK2, CDC42BP, ZIPK/DAPK3 and RAF1 is present on threonine 697. Residues 719 to 768 (RTREQENEEKDKEEKEKQDKEKQEEKKESEVSREDEYKQKYSRTYDETYA) are compositionally biased toward basic and acidic residues. Low complexity predominate over residues 774-797 (STSSSSTPSSSSLSTLGSSLYASS). Over residues 798–812 (QLNRPNSLVGITSAY) the composition is skewed to polar residues. Serine 804 carries the post-translational modification Phosphoserine. A compositionally biased stretch (basic and acidic residues) spans 816-842 (LTKDNEREGEKKEEEKEGEDKSQPKSI). Residues 843-854 (RERRRPREKRRS) are compositionally biased toward basic residues. Position 854 is a phosphoserine; by ROCK2 (serine 854). Serine 864 and serine 873 each carry phosphoserine. A compositionally biased stretch (basic and acidic residues) spans 869 to 885 (QERQSDTEDGSSKRDTQ). Residues 886 to 900 (TDSVSRYDSSSTSSS) show a composition bias toward low complexity. Residues serine 905 and serine 910 each carry the phosphoserine modification. Residue serine 912 is modified to Phosphoserine; by NUAK1. Over residues 916 to 928 (LEERKPYGSRLEK) the composition is skewed to basic and acidic residues. Serine 997 is subject to Phosphoserine.

In terms of assembly, PP1 comprises a catalytic subunit, PPP1CA, PPP1CB or PPP1CC, and one or several targeting or regulatory subunits. PPP1R12A mediates binding to myosin. Interacts with ARHA and CIT. Binds PPP1R12B, ROCK1 and IL16. Interacts directly with PRKG1. Non-covalent dimer of 2 dimers; PRKG1-PRKG1 and PPP1R12A-PPP1R12A. Interacts with SMTNL1. Interacts with PPP1CB; the interaction is direct. Interacts (when phosphorylated at Ser-445, Ser-472 and Ser-910) with 14-3-3. Interacts with ROCK1 and ROCK2. Interacts with isoform 1 and isoform 2 of ZIPK/DAPK3. Interacts with RAF1. Interacts with HIF1AN. Interacts with NCKAP1L. In terms of processing, phosphorylated on upon DNA damage, probably by ATM or ATR. Phosphorylated by CIT (Rho-associated kinase). Phosphorylated cooperatively by ROCK1 and CDC42BP on Thr-697. In vitro, phosphorylation of Ser-696 by PKA and PKG appears to prevent phosphorylation of the inhibitory site Thr-697, probably mediated by PRKG1. May be phosphorylated at Thr-697 by DMPK; may inhibit the myosin phosphatase activity. Phosphorylated at Ser-473 by CDK1 during mitosis, creating docking sites for the POLO box domains of PLK1. Subsequently, PLK1 binds and phosphorylates PPP1R12A. Smooth muscle. Detected in aorta, portal vein, stomach, intestine, bladder and lung.

It is found in the cytoplasm. It localises to the cytoskeleton. The protein resides in the stress fiber. Key regulator of protein phosphatase 1C (PPP1C). Mediates binding to myosin. As part of the PPP1C complex, involved in dephosphorylation of PLK1. Capable of inhibiting HIF1AN-dependent suppression of HIF1A activity. The protein is Protein phosphatase 1 regulatory subunit 12A of Rattus norvegicus (Rat).